The following is a 117-amino-acid chain: uncharacterized protein (117 aa).

It localises to the mitochondrion. This is an uncharacterized protein from Arabidopsis thaliana (Mouse-ear cress).